The following is a 530-amino-acid chain: DNA damage-binding protein cmr1 (530 aa).

Disordered stretches follow at residues Val34 to Asp115 and Thr224 to Leu250. The segment covering Ala52–Val62 has biased composition (basic residues). Positions Glu89–Ala108 are enriched in basic and acidic residues. The stretch at Leu188 to Ala229 is one WD 1 repeat. A compositionally biased stretch (acidic residues) spans Asp233 to Asp244. 6 WD repeats span residues Pro252–Arg292, Val302–Ala339, Leu344–Pro384, Glu389–Lys430, Gly453–Leu496, and Asp499–Met530.

The protein belongs to the WD repeat DDB2/WDR76 family.

In terms of biological role, DNA-binding protein that binds to both single- and double-stranded DNA. Binds preferentially to UV-damaged DNA. May be involved in DNA-metabolic processes. In Aspergillus terreus (strain NIH 2624 / FGSC A1156), this protein is DNA damage-binding protein cmr1.